The following is a 42-amino-acid chain: Photosystem II reaction center protein J (42 aa).

The chain crosses the membrane as a helical span at residues 10 to 30 (IPLWIIGTLAGTLVIGLLAIF).

This sequence belongs to the PsbJ family. In terms of assembly, PSII is composed of 1 copy each of membrane proteins PsbA, PsbB, PsbC, PsbD, PsbE, PsbF, PsbH, PsbI, PsbJ, PsbK, PsbL, PsbM, PsbT, PsbX, PsbY, PsbZ, Psb30/Ycf12, at least 3 peripheral proteins of the oxygen-evolving complex and a large number of cofactors. It forms dimeric complexes.

The protein resides in the plastid. It is found in the chloroplast thylakoid membrane. Functionally, one of the components of the core complex of photosystem II (PSII). PSII is a light-driven water:plastoquinone oxidoreductase that uses light energy to abstract electrons from H(2)O, generating O(2) and a proton gradient subsequently used for ATP formation. It consists of a core antenna complex that captures photons, and an electron transfer chain that converts photonic excitation into a charge separation. In Chaetosphaeridium globosum (Charophycean green alga), this protein is Photosystem II reaction center protein J.